The sequence spans 283 residues: Bifunctional protein FolD (283 aa).

Residues 165-167 (GAS) and serine 190 contribute to the NADP(+) site.

It belongs to the tetrahydrofolate dehydrogenase/cyclohydrolase family. Homodimer.

It carries out the reaction (6R)-5,10-methylene-5,6,7,8-tetrahydrofolate + NADP(+) = (6R)-5,10-methenyltetrahydrofolate + NADPH. The catalysed reaction is (6R)-5,10-methenyltetrahydrofolate + H2O = (6R)-10-formyltetrahydrofolate + H(+). Its pathway is one-carbon metabolism; tetrahydrofolate interconversion. Its function is as follows. Catalyzes the oxidation of 5,10-methylenetetrahydrofolate to 5,10-methenyltetrahydrofolate and then the hydrolysis of 5,10-methenyltetrahydrofolate to 10-formyltetrahydrofolate. The protein is Bifunctional protein FolD of Cupriavidus necator (strain ATCC 17699 / DSM 428 / KCTC 22496 / NCIMB 10442 / H16 / Stanier 337) (Ralstonia eutropha).